We begin with the raw amino-acid sequence, 279 residues long: Undecaprenyl-diphosphatase (279 aa).

6 helical membrane-spanning segments follow: residues phenylalanine 45–tyrosine 65, tryptophan 85–phenylalanine 105, phenylalanine 113–valine 133, serine 188–leucine 208, leucine 226–leucine 246, and phenylalanine 255–valine 275.

This sequence belongs to the UppP family.

It localises to the cell membrane. It catalyses the reaction di-trans,octa-cis-undecaprenyl diphosphate + H2O = di-trans,octa-cis-undecaprenyl phosphate + phosphate + H(+). In terms of biological role, catalyzes the dephosphorylation of undecaprenyl diphosphate (UPP). Confers resistance to bacitracin. This Streptococcus agalactiae serotype III (strain NEM316) protein is Undecaprenyl-diphosphatase.